Consider the following 552-residue polypeptide: DNA ligase (552 aa).

Glu244 provides a ligand contact to ATP. Lys246 serves as the catalytic N6-AMP-lysine intermediate. ATP-binding residues include Arg251, Arg266, Glu296, Phe336, Arg408, and Lys414.

It belongs to the ATP-dependent DNA ligase family. Mg(2+) serves as cofactor.

It carries out the reaction ATP + (deoxyribonucleotide)n-3'-hydroxyl + 5'-phospho-(deoxyribonucleotide)m = (deoxyribonucleotide)n+m + AMP + diphosphate.. Its function is as follows. DNA ligase that seals nicks in double-stranded DNA during DNA replication, DNA recombination and DNA repair. The sequence is that of DNA ligase from Methanothrix thermoacetophila (strain DSM 6194 / JCM 14653 / NBRC 101360 / PT) (Methanosaeta thermophila).